The chain runs to 487 residues: Glutamyl-tRNA(Gln) amidotransferase subunit A (487 aa).

Residues Lys-74 and Ser-149 each act as charge relay system in the active site. Ser-173 (acyl-ester intermediate) is an active-site residue.

This sequence belongs to the amidase family. GatA subfamily. In terms of assembly, heterotrimer of A, B and C subunits.

It catalyses the reaction L-glutamyl-tRNA(Gln) + L-glutamine + ATP + H2O = L-glutaminyl-tRNA(Gln) + L-glutamate + ADP + phosphate + H(+). In terms of biological role, allows the formation of correctly charged Gln-tRNA(Gln) through the transamidation of misacylated Glu-tRNA(Gln) in organisms which lack glutaminyl-tRNA synthetase. The reaction takes place in the presence of glutamine and ATP through an activated gamma-phospho-Glu-tRNA(Gln). The protein is Glutamyl-tRNA(Gln) amidotransferase subunit A of Synechococcus sp. (strain WH7803).